Reading from the N-terminus, the 547-residue chain is Dihydroxy-acid dehydratase (547 aa).

Position 78 (Asp78) interacts with Mg(2+). Cys119 contributes to the [2Fe-2S] cluster binding site. Mg(2+) contacts are provided by Asp120 and Lys121. Lys121 is subject to N6-carboxylysine. A [2Fe-2S] cluster-binding site is contributed by Cys191. Residue Glu439 participates in Mg(2+) binding. Residue Ser464 is the Proton acceptor of the active site.

It belongs to the IlvD/Edd family. Homodimer. The cofactor is [2Fe-2S] cluster. Mg(2+) serves as cofactor.

The enzyme catalyses (2R)-2,3-dihydroxy-3-methylbutanoate = 3-methyl-2-oxobutanoate + H2O. The catalysed reaction is (2R,3R)-2,3-dihydroxy-3-methylpentanoate = (S)-3-methyl-2-oxopentanoate + H2O. The protein operates within amino-acid biosynthesis; L-isoleucine biosynthesis; L-isoleucine from 2-oxobutanoate: step 3/4. Its pathway is amino-acid biosynthesis; L-valine biosynthesis; L-valine from pyruvate: step 3/4. Functionally, functions in the biosynthesis of branched-chain amino acids. Catalyzes the dehydration of (2R,3R)-2,3-dihydroxy-3-methylpentanoate (2,3-dihydroxy-3-methylvalerate) into 2-oxo-3-methylpentanoate (2-oxo-3-methylvalerate) and of (2R)-2,3-dihydroxy-3-methylbutanoate (2,3-dihydroxyisovalerate) into 2-oxo-3-methylbutanoate (2-oxoisovalerate), the penultimate precursor to L-isoleucine and L-valine, respectively. In Archaeoglobus fulgidus (strain ATCC 49558 / DSM 4304 / JCM 9628 / NBRC 100126 / VC-16), this protein is Dihydroxy-acid dehydratase.